A 315-amino-acid chain; its full sequence is NAD kinase (315 aa).

Asp91 serves as the catalytic Proton acceptor. Residues 91–92, Arg96, 165–166, Asp195, and 206–211 each bind NAD(+); these read DG, NE, and TAYAFS.

This sequence belongs to the NAD kinase family. The cofactor is a divalent metal cation.

The protein localises to the cytoplasm. It catalyses the reaction NAD(+) + ATP = ADP + NADP(+) + H(+). Functionally, involved in the regulation of the intracellular balance of NAD and NADP, and is a key enzyme in the biosynthesis of NADP. Catalyzes specifically the phosphorylation on 2'-hydroxyl of the adenosine moiety of NAD to yield NADP. In Rhodococcus erythropolis (strain PR4 / NBRC 100887), this protein is NAD kinase.